A 338-amino-acid chain; its full sequence is UDP-glucose 4-epimerase (338 aa).

NAD(+) contacts are provided by residues 11–12 (YI), 31–36 (DNLCNS), 58–59 (DI), 80–84 (FAGLK), Asn99, Ser124, Tyr149, Lys153, and Phe178. The substrate site is built by Ser124 and Tyr149. Tyr149 functions as the Proton acceptor in the catalytic mechanism. Residues Asn179, 199 to 200 (NL), 216 to 218 (AIF), Arg231, 292 to 295 (REGD), and Tyr299 each bind substrate.

Belongs to the NAD(P)-dependent epimerase/dehydratase family. Homodimer. NAD(+) serves as cofactor.

It catalyses the reaction UDP-alpha-D-glucose = UDP-alpha-D-galactose. It participates in carbohydrate metabolism; galactose metabolism. With respect to regulation, inhibited by UDP-phenol and NaBH3CN. Its function is as follows. Involved in the metabolism of galactose. Catalyzes the conversion of UDP-galactose (UDP-Gal) to UDP-glucose (UDP-Glc) through a mechanism involving the transient reduction of NAD. It is only active on UDP-galactose and UDP-glucose. The chain is UDP-glucose 4-epimerase (galE) from Escherichia coli (strain K12).